We begin with the raw amino-acid sequence, 171 residues long: Translationally-controlled tumor protein homolog (171 aa).

The region spanning 1-171 (MKIWKDVFTG…FKHGLEEEKF (171 aa)) is the TCTP domain.

It belongs to the TCTP family.

The protein localises to the cytoplasm. Involved in calcium binding and microtubule stabilization. The sequence is that of Translationally-controlled tumor protein homolog from Anopheles gambiae (African malaria mosquito).